The following is a 1006-amino-acid chain: Unconventional myosin-Id (1006 aa).

Alanine 2 is subject to N-acetylalanine. In terms of domain architecture, Myosin motor spans 9–695; sequence FGKADFVLMD…TLFTLEELRA (687 aa). 102-109 contributes to the ATP binding site; that stretch reads GESGAGKT. The residue at position 200 (serine 200) is a Phosphoserine. Tyrosine 536 carries the post-translational modification Phosphotyrosine. Residues 572 to 594 are actin-binding; it reads MIALVDNLASKEPYYVRCIKPND. 2 IQ domains span residues 699–719 and 721–741; these read VRVV…MRYK and TKAA…SYIH. The 194-residue stretch at 812 to 1005 folds into the TH1 domain; the sequence is GQRADLGLQR…RSGFILSVPG (194 aa).

The protein belongs to the TRAFAC class myosin-kinesin ATPase superfamily. Myosin family. As to quaternary structure, interacts (via the two IQ motifs) with calmodulin. Binds an additional calmodulin chain via a third, C-terminal region. Interacts with F-actin. Detected in enterocytes at the intestinal brush border membrane. Detected at the tip of intestinal microvilli (at protein level).

The protein resides in the cytoplasm. It localises to the perikaryon. Its subcellular location is the cell projection. It is found in the dendrite. The protein localises to the early endosome. The protein resides in the cell cortex. It localises to the basolateral cell membrane. Functionally, unconventional myosin that functions as actin-based motor protein with ATPase activity. Plays a role in endosomal protein trafficking, and especially in the transfer of cargo proteins from early to recycling endosomes. Required for normal planar cell polarity in ciliated tracheal cells, for normal rotational polarity of cilia, and for coordinated, unidirectional ciliary movement in the trachea. Required for normal, polarized cilia organization in brain ependymal epithelial cells. The chain is Unconventional myosin-Id from Mus musculus (Mouse).